The following is a 363-amino-acid chain: MGNIHIQTKSKEYDVYVGKESLSHLTTIVQNMQPSVSNIMIISDEAVASLHLQTVVDALQIDQKVFSFVVPSGEKEKSFENFYAAHTSALENKLDRNSLIIALGGGMIGDLAGFVAASFMRGIRFVQVPTTLLAHDSAVGGKVAINHPLGKNMIGAFHQPEAVVYHTPFLQSLPEKEWRSGYAEVIKHALIGDVKLYHWLKEEVQTLADLRDEKLIHILMKAIPVKANIVAQDETEKGVRAHLNFGHTLGHALEKELGYGNITHGDGVAVGMLFAIFLSEQVYKVNLAYEEMKQWFLNYGYPKMPSDLSVERLVGLMKQDKKANAGTIHMVLMQEYGVVNVVSIPDETVHIALEAFQKDMVEK.

Residues 72-77 (SGEKEK), 130-131 (TT), Lys142, and Lys151 contribute to the NAD(+) site. Residues Glu184, His247, and His264 each coordinate Zn(2+).

This sequence belongs to the sugar phosphate cyclases superfamily. Dehydroquinate synthase family. The cofactor is Co(2+). Zn(2+) serves as cofactor. It depends on NAD(+) as a cofactor.

It localises to the cytoplasm. The enzyme catalyses 7-phospho-2-dehydro-3-deoxy-D-arabino-heptonate = 3-dehydroquinate + phosphate. The protein operates within metabolic intermediate biosynthesis; chorismate biosynthesis; chorismate from D-erythrose 4-phosphate and phosphoenolpyruvate: step 2/7. In terms of biological role, catalyzes the conversion of 3-deoxy-D-arabino-heptulosonate 7-phosphate (DAHP) to dehydroquinate (DHQ). The chain is 3-dehydroquinate synthase from Bacillus anthracis (strain A0248).